Reading from the N-terminus, the 188-residue chain is Elongation factor P (188 aa).

This sequence belongs to the elongation factor P family.

Its subcellular location is the cytoplasm. Its pathway is protein biosynthesis; polypeptide chain elongation. Its function is as follows. Involved in peptide bond synthesis. Stimulates efficient translation and peptide-bond synthesis on native or reconstituted 70S ribosomes in vitro. Probably functions indirectly by altering the affinity of the ribosome for aminoacyl-tRNA, thus increasing their reactivity as acceptors for peptidyl transferase. This is Elongation factor P from Nitrosospira multiformis (strain ATCC 25196 / NCIMB 11849 / C 71).